We begin with the raw amino-acid sequence, 426 residues long: Enolase (426 aa).

Residue Gln163 coordinates (2R)-2-phosphoglycerate. Glu205 serves as the catalytic Proton donor. 3 residues coordinate Mg(2+): Asp242, Glu285, and Asp312. Residues Lys337, Arg366, Ser367, and Lys388 each contribute to the (2R)-2-phosphoglycerate site. Residue Lys337 is the Proton acceptor of the active site.

Belongs to the enolase family. Requires Mg(2+) as cofactor.

It is found in the cytoplasm. Its subcellular location is the secreted. The protein localises to the cell surface. The catalysed reaction is (2R)-2-phosphoglycerate = phosphoenolpyruvate + H2O. It participates in carbohydrate degradation; glycolysis; pyruvate from D-glyceraldehyde 3-phosphate: step 4/5. Catalyzes the reversible conversion of 2-phosphoglycerate (2-PG) into phosphoenolpyruvate (PEP). It is essential for the degradation of carbohydrates via glycolysis. The protein is Enolase of Gluconacetobacter diazotrophicus (strain ATCC 49037 / DSM 5601 / CCUG 37298 / CIP 103539 / LMG 7603 / PAl5).